Consider the following 152-residue polypeptide: Transcriptional regulator MraZ (152 aa).

SpoVT-AbrB domains are found at residues 5 to 52 and 81 to 124; these read ATLV…PLPE and ASEC…DETT.

This sequence belongs to the MraZ family. In terms of assembly, forms oligomers.

The protein localises to the cytoplasm. The protein resides in the nucleoid. In terms of biological role, negatively regulates its own expression and that of the subsequent genes in the proximal part of the division and cell wall (dcw) gene cluster. Acts by binding directly to DNA. May also regulate the expression of genes outside the dcw cluster. In Salmonella typhi, this protein is Transcriptional regulator MraZ.